A 243-amino-acid chain; its full sequence is Aldehyde decarbonylase (243 aa).

Fe cation contacts are provided by Glu45, Glu73, His76, Glu128, and His160.

The protein belongs to the aldehyde decarbonylase family. Binds 2 metal cations per subunit. The catalytic dinuclear metal-binding site could be either a di-iron or a manganese-iron cofactor. is required as a cofactor.

It carries out the reaction a long-chain fatty aldehyde + 2 NADPH + O2 + H(+) = a long-chain alkane + formate + 2 NADP(+) + H2O. Functionally, catalyzes the decarbonylation of fatty aldehydes to alkanes. Requires the presence of ferredoxin, ferredoxin reductase and NADPH for in vitro decarbonylase activity. Involved in the biosynthesis of alkanes, mainly heptadecane and pentadecane. The protein is Aldehyde decarbonylase of Prochlorococcus marinus (strain MIT 9313).